Here is a 1019-residue protein sequence, read N- to C-terminus: Collagen alpha-1(VI) chain (1019 aa).

An N-terminal signal peptide occupies residues 1–19 (MGLHDSFLALLLLLGGAWA). Residues 37-233 (DLFFVLDTSE…LDVEETINNI (197 aa)) form the VWFA 1 domain. Residue Asn-212 is glycosylated (N-linked (GlcNAc...) asparagine). The disordered stretch occupies residues 248 to 588 (FECHPPRGPP…GPPGPVGPPG (341 aa)). Residues 253 to 262 (PRGPPGPPGD) show a composition bias toward pro residues. Composition is skewed to basic and acidic residues over residues 299–332 (KGDK…DGMK) and 370–380 (GKGEPGEDGKP). Low complexity predominate over residues 427 to 436 (ERGPPGSPGD). Positions 476-478 (RGD) match the Cell attachment site motif. An N-linked (GlcNAc...) asparagine glycan is attached at Asn-514. A Cell attachment site motif is present at residues 529–531 (RGD). Asn-535 carries N-linked (GlcNAc...) asparagine glycosylation. A compositionally biased stretch (pro residues) spans 577–588 (RPGPPGPVGPPG). 2 VWFA domains span residues 613-800 (DLLF…LQNI) and 824-1012 (DIML…YQTV). Residues Asn-799 and Asn-887 are each glycosylated (N-linked (GlcNAc...) asparagine).

It belongs to the type VI collagen family. In terms of assembly, trimers composed of three different chains: alpha 1(VI), alpha 2(VI), and alpha 3(VI). In terms of processing, prolines at the third position of the tripeptide repeating unit (G-X-Y) are hydroxylated in some or all of the chains.

The protein localises to the secreted. Its subcellular location is the extracellular space. It is found in the extracellular matrix. In terms of biological role, collagen VI acts as a cell-binding protein. The protein is Collagen alpha-1(VI) chain (COL6A1) of Gallus gallus (Chicken).